A 371-amino-acid chain; its full sequence is MIDLRSPNALLSDYVERYAHLSPEPSRQLQQRMDYNVRADAPAEPASKPRWLQSRACTLTPEQALDRAKGALLGLAIGDAVGTTLEFLPRDREHVNDMVGGGPFRLAAGEWTDDTSMALCLADTYVSQGKFDYATYANALVRWYRHGENSVNGRCFDIGNATRNALEGWLREGIGWQGNYDPSTAGNGSIIRLAPTAIFRRHSLSASWWESVTQSSVTHNADEAVNCCQLLAAQLHLALNGADKEETLAPAVRSLRPRPMIINAGEYKQKSRDQIRSSGYVVDTLEAALWAVWNSNNFHDAILLAANLADDADSVAATAGQLAGALYGVSGMPPEWVEKVAWSQHIQKLAQELFDRAPQVDELDALLYGKR.

The N-terminal extension stretch occupies residues 1 to 61 (MIDLRSPNAL…LQSRACTLTP (61 aa)). Residues 70 to 362 (GALLGLAIGD…LFDRAPQVDE (293 aa)) are ADP-ribosyl hydrolase domain. Mg(2+) is bound by residues Thr112, Asp113, Asp114, Asp157, and Asp313.

It belongs to the ADP-ribosylglycohydrolase family. Mg(2+) serves as cofactor.

The catalysed reaction is N(omega)-(ADP-D-ribosyl)-L-arginyl-[protein] + H2O = ADP-D-ribose + L-arginyl-[protein]. Its function is as follows. Immunity component of an interbacterial competition system (also called effector-immunity systems). Expression in E.coli neutralizes the toxic effects of non-cognate S.proteamaculans effector protein Tre1 (Tre1-Sp); cannot be co-purified with Tre1-Sp from E.coli, suggesting they do not form a stable complex. Probably acts as an arginine mono-ADP-ribosylhydrolase, mediating the removal of mono-ADP-ribose attached to arginine residues on proteins. Probably de-ADP-ribosylates FtsZ and possibly other proteins; the ability to hydrolyze ADP-ribosyl moieties is not essential for neutralization of its cognate toxin, strongly suggesting its N-terminal extension occludes the active site of cognate toxin Tre1. In Pseudomonas putida (strain GB-1), this protein is ADP-ribosylarginine hydrolase Tri1.